The sequence spans 592 residues: UvrABC system protein C (592 aa).

The region spanning 14-91 is the GIY-YIG domain; it reads KKPGCYLWKN…IKKHKPRYNI (78 aa). The UVR domain occupies 197 to 232; it reads DQVLKDLKEKESIASEKFDFEQAKKYLDLQKAINLI.

Belongs to the UvrC family. Interacts with UvrB in an incision complex.

It is found in the cytoplasm. In terms of biological role, the UvrABC repair system catalyzes the recognition and processing of DNA lesions. UvrC both incises the 5' and 3' sides of the lesion. The N-terminal half is responsible for the 3' incision and the C-terminal half is responsible for the 5' incision. The sequence is that of UvrABC system protein C from Mycoplasmoides gallisepticum (strain R(low / passage 15 / clone 2)) (Mycoplasma gallisepticum).